Consider the following 570-residue polypeptide: Endo-1,4-beta-xylanase 4 (570 aa).

Residues 1–24 form the signal peptide; it reads MKRFNYGFFHLVLFLISLLLLGSG. N-linked (GlcNAc...) asparagine glycans are attached at residues N92, N190, and N300. A GH10 domain is found at 195–494; it reads EGSVISIEQI…TQAGDLIDKL (300 aa). E325 serves as the catalytic Proton donor. Residue N339 is glycosylated (N-linked (GlcNAc...) asparagine). E432 acts as the Nucleophile in catalysis. N545 is a glycosylation site (N-linked (GlcNAc...) asparagine).

It belongs to the glycosyl hydrolase 10 (cellulase F) family.

It carries out the reaction Endohydrolysis of (1-&gt;4)-beta-D-xylosidic linkages in xylans.. Its pathway is glycan degradation; xylan degradation. In terms of biological role, binds to and hydrolyzes insoluble and soluble xylan substrates. This is Endo-1,4-beta-xylanase 4 from Arabidopsis thaliana (Mouse-ear cress).